The following is a 128-amino-acid chain: Con-Ins F2c (128 aa).

The first 24 residues, 1 to 24, serve as a signal peptide directing secretion; that stretch reads MTTSSYFLLVALGLLLYVCRSSFG. Disulfide bonds link Cys29–Cys104, Cys41–Cys107, Cys53–Cys120, and Cys106–Cys111. A propeptide spans 59–89 (c peptide); the sequence is LQGGTGKKRGRASLLRKRRAFLSMLKARAKR. Glu115 carries the 4-carboxyglutamate; partial modification. Serine amide is present on Ser127.

It belongs to the insulin family. Heterodimer of A and B chains; disulfide-linked. In terms of tissue distribution, expressed by the venom gland.

Its subcellular location is the secreted. In terms of biological role, this venom insulin facilitates prey capture by rapidly inducing hypoglycemic shock. Intraperitoneal injection of this peptide into zebrafish lowers blood glucose with the same potency than human insulin. In vivo, when applied to water, this peptide reduces overall locomotor activity of zebrafish larvae, observed as a significant decrease in the percentage of time spent swimming and movement frequency. The sequence is that of Con-Ins F2c from Conus floridulus (Cone snail).